The following is a 1483-amino-acid chain: MSNTPYNSSVPSIASMTQSSVSRSPNMHTATTPGANTSSNSPPLHMSSDSSKIKRKRNRIPLSCTICRKRKVKCDKLRPHCQQCTKTGVAHLCHYMEQTWAEEAEKELLKDNELKKLRERVKSLEKTLSKVHSSPSSNSLKSYNTPESSNLFMGSDEHTTLVNANTGSASSASHMHQQQQQQQQQEQQQDFSRSANANANSSSLSISNKYDNDELDLTKDFDLLHIKSNGTIHLGATHWLSIMKGDPYLKLLWGHIFAMREKLNEWYYQKNSYSKLKSSKCPINHAQAPPSAAAAATRKCPVDHSAFSSGMVAPKEETPLPRKCPVDHTMFSSGMIPPREDTSSQKRCPVDHTMYSAGMMPPKDETPSPFSTKAMIDHNKHTMNPPQSKCPVDHRNYMKDYPSDMANSSSNPASRCPIDHSSMKNTAALPASTHNTIPHHQPQSGSHARSHPAQSRKHDSYMTESEVLATLCEMLPPKRVIALFIEKFFKHLYPAIPILDEQNFKNHVNQMLSLSSMNPTVNNFGMSMPSSSTLENQPITQINLPKLSDSCNLGILIIILRLTWLSIPSNSCEVDLGEESGSFLVPNESSNMSASALTSMAKEESLLLKHETPVEALELCQKYLIKFDELSSISNNNVNLTTVQFAIFYNFYMKSASNDLTTLTNTNNTGMANPGHDSESHQILLSNITQMAFSCGLHRDPDNFPQLNATIPATSQDVSNNGSKKANPSTNPTLNNNMSAATTNSSSRSGSADSRSGSNPVNKKENQVSIERFKHTWRKIWYYIVSMDVNQSLSLGSPRLLRNLRDFSDTKLPSASRIDYVRDIKELIIVKNFTLFFQIDLCIIAVLNHILNVSLARSVRKFELDSLINLLKNLTYGTENVNDVVSSLINKGLLPTSEGGSVDSNNDEIYGLPKLPDILNHGQHNQNLYADGRNTSSSDIDKKLDLPHESTTRALFFSKHMTIRMLLYLLNYILFTHYEPMGSEDPGTNILAKEYAQEALNFAMDGYRNCMIFFNNIRNTNSLFDYMNVILSYPCLDIGHRSLQFIVCLILRAKCGPLTGMRESSIITNGTSSGFNSSVEDEDVKVKQESSDELKKDDFMKDVNLDSGDSLAEILMSRMLLFQKLTKQLSKKYNYAIRMNKSTGFFVSLLDTPSKKSDSKSGGSSFMLGNWKHPKVSNMSGFLAGDKDQLQKCPVYQDALGFVSPTGANEGSAPMQGMSLQGSTARMGGTQLPPIRSYKPITYTSSNLRRMNETGEAEAKRRRFNDGYIDNNSNNDIPRGISPKPSNGLSSVQPLLSSFSMNQLNGGTIPTVPSLTNITSQMGALPSLDRITTNQINLPDPSRDEAFDNSIKQMTPMTSAFMNANTTIPSSTLNGNMNMNGAGTANTDTSANGSALSTLTSPQGSDLASNSATQYKPDLEDFLMQNSNFNGLMINPSSLVEVVGGYNDPNNLGRNDAVDFLPVDNVEIDGLVDFYRADFPIWE.

The segment covering 1 to 50 (MSNTPYNSSVPSIASMTQSSVSRSPNMHTATTPGANTSSNSPPLHMSSDS) has biased composition (polar residues). The disordered stretch occupies residues 1–56 (MSNTPYNSSVPSIASMTQSSVSRSPNMHTATTPGANTSSNSPPLHMSSDSSKIKRK). The Zn(2+) site is built by cysteine 64, cysteine 67, cysteine 74, cysteine 81, cysteine 84, and cysteine 93. The zn(2)-C6 fungal-type DNA-binding region spans 64 to 93 (CTICRKRKVKCDKLRPHCQQCTKTGVAHLC). Positions 105–134 (EKELLKDNELKKLRERVKSLEKTLSKVHSS) form a coiled coil. The interval 126 to 208 (KTLSKVHSSP…ANSSSLSISN (83 aa)) is disordered. The segment covering 130–142 (KVHSSPSSNSLKS) has biased composition (low complexity). Composition is skewed to polar residues over residues 143-152 (YNTPESSNLF) and 160-176 (TLVN…SHMH). Low complexity predominate over residues 177–208 (QQQQQQQQQEQQQDFSRSANANANSSSLSISN). Residues 244–444 (KGDPYLKLLW…NTIPHHQPQS (201 aa)) form a heme-responsive; required for HMC formation region. HRM repeat units lie at residues 280–285 (KCPINH), 299–304 (KCPVDH), 323–328 (KCPVDH), 347–352 (RCPVDH), 389–394 (KCPVDH), and 415–420 (RCPIDH). 2 stretches are compositionally biased toward polar residues: residues 432 to 447 (STHN…SGSH) and 706 to 734 (QLNA…NPTL). Disordered stretches follow at residues 432–458 (STHN…SRKH) and 706–767 (QLNA…KENQ). A compositionally biased stretch (low complexity) spans 735-759 (NNNMSAATTNSSSRSGSADSRSGSN). An HRM 7 repeat occupies 1192–1197 (KCPVYQ). The disordered stretch occupies residues 1384–1411 (TANTDTSANGSALSTLTSPQGSDLASNS). The span at 1388 to 1411 (DTSANGSALSTLTSPQGSDLASNS) shows a compositional bias: polar residues.

In terms of assembly, binds DNA as a homodimer. Interacts with SRO9 and YDJ1. In the absence of heme, binds to at least four cellular proteins, including YDJ1 and SRO9, forming a high-molecular-weight complex (HMC) which results in repression of its activity and dictates its DNA-binding specificity.

The protein resides in the nucleus. In terms of biological role, regulation of oxygen dependent gene expression. It modulates the expression of Iso-1 (CYP1) and Iso-2 (CYP3) cytochrome c. In response to heme, promotes transcription of genes encoding functions required for respiration, controlling oxidative damage and repression of anaerobic genes. Binds to the sequence 5'-CGGNNNTNNCGG-3'. Is non-functional in terms of iso-1 cytochrome c expression in strain S288c and its derivatives. In Saccharomyces cerevisiae (Baker's yeast), this protein is Heme-responsive zinc finger transcription factor HAP1 (HAP1).